The sequence spans 420 residues: Glutamyl-tRNA reductase (420 aa).

Substrate-binding positions include 49–52, Ser-109, 114–116, and Gln-120; these read TCNR and EPQ. The active-site Nucleophile is the Cys-50. Residue 189–194 participates in NADP(+) binding; sequence GAGETI.

The protein belongs to the glutamyl-tRNA reductase family. As to quaternary structure, homodimer.

It carries out the reaction (S)-4-amino-5-oxopentanoate + tRNA(Glu) + NADP(+) = L-glutamyl-tRNA(Glu) + NADPH + H(+). It functions in the pathway porphyrin-containing compound metabolism; protoporphyrin-IX biosynthesis; 5-aminolevulinate from L-glutamyl-tRNA(Glu): step 1/2. Functionally, catalyzes the NADPH-dependent reduction of glutamyl-tRNA(Glu) to glutamate 1-semialdehyde (GSA). The polypeptide is Glutamyl-tRNA reductase (Sodalis glossinidius (strain morsitans)).